The following is a 546-amino-acid chain: CTP synthase (546 aa).

The interval 1-266 (MTTRYIFVTG…DDLVVKRFGL (266 aa)) is amidoligase domain. S14 serves as a coordination point for CTP. S14 contacts UTP. Residues 15–20 (SLGKGI) and D72 contribute to the ATP site. Mg(2+) is bound by residues D72 and E140. CTP contacts are provided by residues 147–149 (DIE), 187–192 (KTKPTQ), and K223. Residues 187–192 (KTKPTQ) and K223 contribute to the UTP site. 239–241 (KDV) is a binding site for ATP. Residues 291–542 (VIGMVGKYIE…VAAASAHQKR (252 aa)) form the Glutamine amidotransferase type-1 domain. L-glutamine is bound at residue G352. C379 acts as the Nucleophile; for glutamine hydrolysis in catalysis. Residues 380–383 (LGMQ), E403, and R470 each bind L-glutamine. Residues H515 and E517 contribute to the active site.

It belongs to the CTP synthase family. In terms of assembly, homotetramer.

The enzyme catalyses UTP + L-glutamine + ATP + H2O = CTP + L-glutamate + ADP + phosphate + 2 H(+). It carries out the reaction L-glutamine + H2O = L-glutamate + NH4(+). The catalysed reaction is UTP + NH4(+) + ATP = CTP + ADP + phosphate + 2 H(+). Its pathway is pyrimidine metabolism; CTP biosynthesis via de novo pathway; CTP from UDP: step 2/2. Its activity is regulated as follows. Allosterically activated by GTP, when glutamine is the substrate; GTP has no effect on the reaction when ammonia is the substrate. The allosteric effector GTP functions by stabilizing the protein conformation that binds the tetrahedral intermediate(s) formed during glutamine hydrolysis. Inhibited by the product CTP, via allosteric rather than competitive inhibition. Catalyzes the ATP-dependent amination of UTP to CTP with either L-glutamine or ammonia as the source of nitrogen. Regulates intracellular CTP levels through interactions with the four ribonucleotide triphosphates. This is CTP synthase from Shewanella sp. (strain MR-4).